Here is a 427-residue protein sequence, read N- to C-terminus: Trigger factor (427 aa).

The region spanning 163–248 is the PPIase FKBP-type domain; sequence GDTVVIDFVG…IHEVKAKEVP (86 aa).

Belongs to the FKBP-type PPIase family. Tig subfamily.

The protein resides in the cytoplasm. It carries out the reaction [protein]-peptidylproline (omega=180) = [protein]-peptidylproline (omega=0). Its function is as follows. Involved in protein export. Acts as a chaperone by maintaining the newly synthesized protein in an open conformation. Functions as a peptidyl-prolyl cis-trans isomerase. The sequence is that of Trigger factor from Streptococcus pneumoniae (strain ATCC 700669 / Spain 23F-1).